The sequence spans 302 residues: Citrate lyase subunit beta (302 aa).

Substrate contacts are provided by Arg-76 and Glu-139. Positions 139 and 166 each coordinate Mg(2+).

The protein belongs to the HpcH/HpaI aldolase family. Citrate lyase beta subunit subfamily. Oligomer with a subunit composition of (alpha,beta,gamma)6. The cofactor is Mg(2+).

Its subcellular location is the cytoplasm. It catalyses the reaction citrate = oxaloacetate + acetate. The enzyme catalyses (3S)-citryl-CoA = oxaloacetate + acetyl-CoA. Its function is as follows. Represents a citryl-ACP lyase. The polypeptide is Citrate lyase subunit beta (citE) (Escherichia coli O6:H1 (strain CFT073 / ATCC 700928 / UPEC)).